Reading from the N-terminus, the 214-residue chain is MADS-box protein CMB2 (214 aa).

In terms of domain architecture, MADS-box spans 3–58 (RGKLEIRKIENKTNRQVTFSKRRNGIMKKAQELTVLCDAKVSLLMISSTHKLHHYL). The 91-residue stretch at 84–174 (WERMQEQHRK…VMELEAKFRG (91 aa)) folds into the K-box domain.

As to expression, in flowers. Not found in vegetative tissues.

The protein resides in the nucleus. This chain is MADS-box protein CMB2 (CMB2), found in Dianthus caryophyllus (Carnation).